The primary structure comprises 315 residues: Ribosomal RNA small subunit methyltransferase H (315 aa).

S-adenosyl-L-methionine is bound by residues Gly-42 to His-44, Asp-59, Phe-96, Asp-108, and Gln-115.

This sequence belongs to the methyltransferase superfamily. RsmH family.

It is found in the cytoplasm. The catalysed reaction is cytidine(1402) in 16S rRNA + S-adenosyl-L-methionine = N(4)-methylcytidine(1402) in 16S rRNA + S-adenosyl-L-homocysteine + H(+). Functionally, specifically methylates the N4 position of cytidine in position 1402 (C1402) of 16S rRNA. The protein is Ribosomal RNA small subunit methyltransferase H of Gemmatimonas aurantiaca (strain DSM 14586 / JCM 11422 / NBRC 100505 / T-27).